Reading from the N-terminus, the 61-residue chain is Small ribosomal subunit protein uS14B (61 aa).

4 residues coordinate Zn(2+): Cys-24, Cys-27, Cys-40, and Cys-43.

Belongs to the universal ribosomal protein uS14 family. Zinc-binding uS14 subfamily. Part of the 30S ribosomal subunit. Contacts proteins S3 and S10. It depends on Zn(2+) as a cofactor.

Binds 16S rRNA, required for the assembly of 30S particles and may also be responsible for determining the conformation of the 16S rRNA at the A site. The chain is Small ribosomal subunit protein uS14B from Rhodococcus jostii (strain RHA1).